Consider the following 186-residue polypeptide: Peptidyl-tRNA hydrolase (186 aa).

Y14 contacts tRNA. H19 acts as the Proton acceptor in catalysis. The tRNA site is built by Y61, N63, and N107.

This sequence belongs to the PTH family. Monomer.

It is found in the cytoplasm. It catalyses the reaction an N-acyl-L-alpha-aminoacyl-tRNA + H2O = an N-acyl-L-amino acid + a tRNA + H(+). Its function is as follows. Hydrolyzes ribosome-free peptidyl-tRNAs (with 1 or more amino acids incorporated), which drop off the ribosome during protein synthesis, or as a result of ribosome stalling. Functionally, catalyzes the release of premature peptidyl moieties from peptidyl-tRNA molecules trapped in stalled 50S ribosomal subunits, and thus maintains levels of free tRNAs and 50S ribosomes. The sequence is that of Peptidyl-tRNA hydrolase from Helicobacter pylori (strain HPAG1).